Consider the following 453-residue polypeptide: Bifunctional protein GlmU (453 aa).

Residues 1–226 form a pyrophosphorylase region; the sequence is MKFSTVILAA…SIEVEGVNDR (226 aa). UDP-N-acetyl-alpha-D-glucosamine is bound by residues 8–11, Lys22, Gln73, 78–79, 100–102, Gly137, Glu151, Asn166, and Asn224; these read LAAG, GT, and YGD. Asp102 provides a ligand contact to Mg(2+). Asn224 serves as a coordination point for Mg(2+). The tract at residues 227-247 is linker; sequence IQLARLERAFQARQAKKLLEQ. The segment at 248–453 is N-acetyltransferase; it reads GVMLRDPARF…AGWQRPAKKK (206 aa). 2 residues coordinate UDP-N-acetyl-alpha-D-glucosamine: Arg330 and Lys348. His360 (proton acceptor) is an active-site residue. Residues Tyr363 and Asn374 each contribute to the UDP-N-acetyl-alpha-D-glucosamine site. Acetyl-CoA is bound by residues Ala377, 383–384, Ser402, Ala420, and Arg437; that span reads NY.

This sequence in the N-terminal section; belongs to the N-acetylglucosamine-1-phosphate uridyltransferase family. It in the C-terminal section; belongs to the transferase hexapeptide repeat family. In terms of assembly, homotrimer. It depends on Mg(2+) as a cofactor.

The protein resides in the cytoplasm. The enzyme catalyses alpha-D-glucosamine 1-phosphate + acetyl-CoA = N-acetyl-alpha-D-glucosamine 1-phosphate + CoA + H(+). It carries out the reaction N-acetyl-alpha-D-glucosamine 1-phosphate + UTP + H(+) = UDP-N-acetyl-alpha-D-glucosamine + diphosphate. It participates in nucleotide-sugar biosynthesis; UDP-N-acetyl-alpha-D-glucosamine biosynthesis; N-acetyl-alpha-D-glucosamine 1-phosphate from alpha-D-glucosamine 6-phosphate (route II): step 2/2. The protein operates within nucleotide-sugar biosynthesis; UDP-N-acetyl-alpha-D-glucosamine biosynthesis; UDP-N-acetyl-alpha-D-glucosamine from N-acetyl-alpha-D-glucosamine 1-phosphate: step 1/1. Its pathway is bacterial outer membrane biogenesis; LPS lipid A biosynthesis. Functionally, catalyzes the last two sequential reactions in the de novo biosynthetic pathway for UDP-N-acetylglucosamine (UDP-GlcNAc). The C-terminal domain catalyzes the transfer of acetyl group from acetyl coenzyme A to glucosamine-1-phosphate (GlcN-1-P) to produce N-acetylglucosamine-1-phosphate (GlcNAc-1-P), which is converted into UDP-GlcNAc by the transfer of uridine 5-monophosphate (from uridine 5-triphosphate), a reaction catalyzed by the N-terminal domain. The protein is Bifunctional protein GlmU of Vibrio cholerae serotype O1 (strain ATCC 39541 / Classical Ogawa 395 / O395).